A 173-amino-acid chain; its full sequence is Ribosome maturation factor RimM (173 aa).

The PRC barrel domain occupies glutamate 98–leucine 170.

The protein belongs to the RimM family. In terms of assembly, binds ribosomal protein uS19.

It is found in the cytoplasm. Its function is as follows. An accessory protein needed during the final step in the assembly of 30S ribosomal subunit, possibly for assembly of the head region. Essential for efficient processing of 16S rRNA. May be needed both before and after RbfA during the maturation of 16S rRNA. It has affinity for free ribosomal 30S subunits but not for 70S ribosomes. The chain is Ribosome maturation factor RimM from Geotalea uraniireducens (strain Rf4) (Geobacter uraniireducens).